The sequence spans 362 residues: Peptide chain release factor 1 (362 aa).

Glutamine 237 carries the post-translational modification N5-methylglutamine.

Belongs to the prokaryotic/mitochondrial release factor family. In terms of processing, methylated by PrmC. Methylation increases the termination efficiency of RF1.

The protein resides in the cytoplasm. Its function is as follows. Peptide chain release factor 1 directs the termination of translation in response to the peptide chain termination codons UAG and UAA. The protein is Peptide chain release factor 1 (prfA) of Aquifex aeolicus (strain VF5).